Consider the following 466-residue polypeptide: 3-isopropylmalate dehydratase large subunit (466 aa).

3 residues coordinate [4Fe-4S] cluster: Cys-347, Cys-407, and Cys-410.

This sequence belongs to the aconitase/IPM isomerase family. LeuC type 1 subfamily. Heterodimer of LeuC and LeuD. The cofactor is [4Fe-4S] cluster.

It catalyses the reaction (2R,3S)-3-isopropylmalate = (2S)-2-isopropylmalate. The protein operates within amino-acid biosynthesis; L-leucine biosynthesis; L-leucine from 3-methyl-2-oxobutanoate: step 2/4. Its function is as follows. Catalyzes the isomerization between 2-isopropylmalate and 3-isopropylmalate, via the formation of 2-isopropylmaleate. This chain is 3-isopropylmalate dehydratase large subunit, found in Escherichia coli O9:H4 (strain HS).